Consider the following 125-residue polypeptide: Aspercryptin biosynthesis cluster protein K (125 aa).

Residues 104-125 are disordered; it reads QRAESVAGDSRPREHRQGAVGY. A compositionally biased stretch (basic and acidic residues) spans 113-125; that stretch reads SRPREHRQGAVGY.

It participates in secondary metabolite biosynthesis. Functionally, part of the gene cluster that mediates the biosynthesis of aspercryptins, linear lipopeptides built from six amino acids including 2 highly unusual and nonproteogenic amino acids, 2-amino-octanoic acid (2aoa) and 2-amino-dodecanol (2adol). The core structure of aspercryptins is as follows: Ser/Ala-Thr-Ile/Val-2aoa-Asn-2adol. The first step of aspercryptin biosynthesis is the generation of the fatty acid precursors, octanoic and dodecanoic acids, by the FAS subunits atnF and atnM. The fatty acid precursors are likely transformed into the corresponding alpha-amino fatty acids in three steps. First, they are hydroxylated by the cytochrome P450 monooxygenase atnE, then oxidized to the corresponding alpha-keto acids by the NAD(P)-dependent oxidoreductase atnD, and finally converted to the alpha-amino fatty acids by the PLP-dependent aminotransferases atnH or atnJ. the alpha-amino fatty acids, 2-amino-octanoic and 2-amino-dodecanoic acids, are recognized, activated, and covalently tethered to the NRPS atnA by its fourth and sixth adenylation domains. The second module of atnA is the Thr module and contains an epimerase (E) domain responsible for the epimerization of Thr to D-allo-Thr. Additionally, despite atnA having only one epimerase domain, the first amino acid of aspercryptin A1 is D-Ser, suggesting that serine is either loaded directly as D-Ser on the first module or that the epimerase domain in the threonine module epimerizes both L-Ser and L-Thr. After condensation of the hexapeptide of aspercryptin, the C-terminal reductase (TE) domain might be involved in the reductive release and production of the aldehyde hexapeptide. Further reduction would generate aspercryptins. The variety of aspercryptins produced reflects the flexibility of the atnA NRPS, allowing incorporation of alanine instead of serine, valine for isoleucine, and a C10 fatty amino alcohol instead of the C12 version. AtnB seems to be involved in the selectivity for Ile versus Val by the third module. Moreover, type B, C and D aspercryptins have an additional N-terminal cichorine, acetyl and propionyl group respectively. This is Aspercryptin biosynthesis cluster protein K from Emericella nidulans (strain FGSC A4 / ATCC 38163 / CBS 112.46 / NRRL 194 / M139) (Aspergillus nidulans).